A 256-amino-acid chain; its full sequence is Alcohol dehydrogenase (256 aa).

Residue 12-35 (FVAGLGGIGLDTSREIVKAGPKNL) coordinates NAD(+). Residue serine 140 coordinates substrate. Catalysis depends on tyrosine 153, which acts as the Proton acceptor.

This sequence belongs to the short-chain dehydrogenases/reductases (SDR) family. Homodimer.

It catalyses the reaction a primary alcohol + NAD(+) = an aldehyde + NADH + H(+). It carries out the reaction a secondary alcohol + NAD(+) = a ketone + NADH + H(+). The polypeptide is Alcohol dehydrogenase (Adh) (Zaprionus tuberculatus (Vinegar fly)).